Reading from the N-terminus, the 185-residue chain is Large ribosomal subunit protein uL5 (185 aa).

This sequence belongs to the universal ribosomal protein uL5 family. Part of the 50S ribosomal subunit; part of the 5S rRNA/L5/L18/L25 subcomplex. Contacts the 5S rRNA and the P site tRNA. Forms a bridge to the 30S subunit in the 70S ribosome.

Functionally, this is one of the proteins that bind and probably mediate the attachment of the 5S RNA into the large ribosomal subunit, where it forms part of the central protuberance. In the 70S ribosome it contacts protein S13 of the 30S subunit (bridge B1b), connecting the 2 subunits; this bridge is implicated in subunit movement. Contacts the P site tRNA; the 5S rRNA and some of its associated proteins might help stabilize positioning of ribosome-bound tRNAs. The protein is Large ribosomal subunit protein uL5 of Caulobacter sp. (strain K31).